Reading from the N-terminus, the 524-residue chain is Serine/threonine-protein kinase PAK 2 (524 aa).

Residues 1–81 form a disordered region; it reads MSDNGELEDK…PEISPPSDFE (81 aa). Position 2 is an N-acetylserine (Ser2). Phosphoserine is present on residues Ser2, Ser20, Ser55, Ser58, and Ser59. A Phosphothreonine modification is found at Thr60. Lys62 carries the post-translational modification N6-acetyllysine. Phosphoserine is present on Ser64. The segment covering 67–81 has biased composition (basic and acidic residues); sequence KEKERPEISPPSDFE. Residues 69–112 are GTPase-binding; sequence KERPEISPPSDFEHTIHVGFDAVTGEFTGMPEQWARLLQTSNIT. Residues 69-137 form an autoregulatory region region; that stretch reads KERPEISPPS…KFYDSNTVKQ (69 aa). In terms of domain architecture, CRIB spans 74–87; it reads ISPPSDFEHTIHVG. The interval 88–248 is linker; it reads FDAVTGEFTG…IVSIGDPKKK (161 aa). Lys128 carries the post-translational modification N6-acetyllysine. At Thr134 the chain carries Phosphothreonine. Residue Tyr139 is modified to Phosphotyrosine. Ser141 is subject to Phosphoserine. Residues 142–190 form a disordered region; that stretch reads FTPPEKDGFPSGTPALNTKGSETSAVVTEEDDDDEDAAPPVIAPRPDHT. Phosphothreonine is present on Thr143. Ser152 is modified (phosphoserine). A phosphothreonine mark is found at Thr154, Thr159, and Thr169. Over residues 155 to 167 the composition is skewed to polar residues; that stretch reads PALNTKGSETSAV. A compositionally biased stretch (acidic residues) spans 169–178; sequence TEEDDDDEDA. Ser197 carries the post-translational modification Phosphoserine. Positions 204–228 are disordered; that stretch reads APVGDSNVDSGAKSSDKQKKKAKMT. Positions 245–251 match the Nuclear localization signal motif; the sequence is PKKKYTR. The region spanning 249-500 is the Protein kinase domain; that stretch reads YTRYEKIGQG…AKELLQHPFL (252 aa). Residues 255 to 263 and Lys278 contribute to the ATP site; that span reads IGQGASGTV. The active-site Proton acceptor is Asp368. Thr402 bears the Phosphothreonine; by autocatalysis mark.

Belongs to the protein kinase superfamily. STE Ser/Thr protein kinase family. STE20 subfamily. Interacts tightly with GTP-bound but not GDP-bound CDC42/p21 and RAC1. Interacts with SH3MD4. Interacts with SCRIB. Interacts with ARHGEF7 and GIT1. PAK-2p34 interacts with ARHGAP10. Interacts with RAC1. In terms of processing, full-length PAK2 is autophosphorylated when activated by CDC42/p21. Following cleavage, both peptides, PAK-2p27 and PAK-2p34, become highly autophosphorylated. Autophosphorylation of PAK-2p27 can occur in the absence of any effectors and is dependent on phosphorylation of Thr-402, because PAK-2p27 is acting as an exogenous substrate. Post-translationally, during apoptosis proteolytically cleaved by caspase-3 or caspase-3-like proteases to yield active PAK-2p34. Ubiquitinated, leading to its proteasomal degradation.

It is found in the cytoplasm. The protein resides in the nucleus. Its subcellular location is the perinuclear region. It localises to the membrane. It catalyses the reaction L-seryl-[protein] + ATP = O-phospho-L-seryl-[protein] + ADP + H(+). The enzyme catalyses L-threonyl-[protein] + ATP = O-phospho-L-threonyl-[protein] + ADP + H(+). Activated by binding small G proteins. Binding of GTP-bound CDC42 or RAC1 to the autoregulatory region releases monomers from the autoinhibited dimer, enables phosphorylation of Thr-402 and allows the kinase domain to adopt an active structure. Following caspase cleavage, autophosphorylated PAK-2p34 is constitutively active. Serine/threonine protein kinase that plays a role in a variety of different signaling pathways including cytoskeleton regulation, cell motility, cell cycle progression, apoptosis or proliferation. Acts as a downstream effector of the small GTPases CDC42 and RAC1. Activation by the binding of active CDC42 and RAC1 results in a conformational change and a subsequent autophosphorylation on several serine and/or threonine residues. Full-length PAK2 stimulates cell survival and cell growth. Phosphorylates MAPK4 and MAPK6 and activates the downstream target MAPKAPK5, a regulator of F-actin polymerization and cell migration. Phosphorylates JUN and plays an important role in EGF-induced cell proliferation. Phosphorylates many other substrates including histone H4 to promote assembly of H3.3 and H4 into nucleosomes, BAD, ribosomal protein S6, or MBP. Phosphorylates CASP7, thereby preventing its activity. Additionally, associates with ARHGEF7 and GIT1 to perform kinase-independent functions such as spindle orientation control during mitosis. On the other hand, apoptotic stimuli such as DNA damage lead to caspase-mediated cleavage of PAK2, generating PAK-2p34, an active p34 fragment that translocates to the nucleus and promotes cellular apoptosis involving the JNK signaling pathway. Caspase-activated PAK2 phosphorylates MKNK1 and reduces cellular translation. This Rattus norvegicus (Rat) protein is Serine/threonine-protein kinase PAK 2 (Pak2).